The chain runs to 1062 residues: Probable sucrose-phosphate synthase 3 (1062 aa).

The segment covering 113-122 (EREQGRRDAT) has biased composition (basic and acidic residues). The disordered stretch occupies residues 113–141 (EREQGRRDATEDLSEDLSEGEKGDGLGEI). Residues Ser-126, Ser-130, and Ser-156 each carry the phosphoserine modification. Residues 715–735 (MDGDKPSLNGSLEPNSADPVK) form a disordered region.

It belongs to the glycosyltransferase 1 family. Homodimer or homotetramer.

The enzyme catalyses beta-D-fructose 6-phosphate + UDP-alpha-D-glucose = sucrose 6(F)-phosphate + UDP + H(+). It functions in the pathway glycan biosynthesis; sucrose biosynthesis; sucrose from D-fructose 6-phosphate and UDP-alpha-D-glucose: step 1/2. With respect to regulation, activity is regulated by phosphorylation and moderated by concentration of metabolites and light. In terms of biological role, plays a role in photosynthetic sucrose synthesis by catalyzing the rate-limiting step of sucrose biosynthesis from UDP-glucose and fructose- 6-phosphate. Involved in the regulation of carbon partitioning in the leaves of plants. May regulate the synthesis of sucrose and therefore play a major role as a limiting factor in the export of photoassimilates out of the leaf. Plays a role for sucrose availability that is essential for plant growth and fiber elongation. The sequence is that of Probable sucrose-phosphate synthase 3 (SPS3) from Arabidopsis thaliana (Mouse-ear cress).